We begin with the raw amino-acid sequence, 156 residues long: 6,7-dimethyl-8-ribityllumazine synthase (156 aa).

Residues F22, 57-59 (AVE), and 81-83 (CVI) contribute to the 5-amino-6-(D-ribitylamino)uracil site. A (2S)-2-hydroxy-3-oxobutyl phosphate-binding site is contributed by 86–87 (GT). The active-site Proton donor is H89. Position 114 (F114) interacts with 5-amino-6-(D-ribitylamino)uracil. R128 lines the (2S)-2-hydroxy-3-oxobutyl phosphate pocket.

This sequence belongs to the DMRL synthase family. In terms of assembly, forms an icosahedral capsid composed of 60 subunits, arranged as a dodecamer of pentamers.

It carries out the reaction (2S)-2-hydroxy-3-oxobutyl phosphate + 5-amino-6-(D-ribitylamino)uracil = 6,7-dimethyl-8-(1-D-ribityl)lumazine + phosphate + 2 H2O + H(+). Its pathway is cofactor biosynthesis; riboflavin biosynthesis; riboflavin from 2-hydroxy-3-oxobutyl phosphate and 5-amino-6-(D-ribitylamino)uracil: step 1/2. Its function is as follows. Catalyzes the formation of 6,7-dimethyl-8-ribityllumazine by condensation of 5-amino-6-(D-ribitylamino)uracil with 3,4-dihydroxy-2-butanone 4-phosphate. This is the penultimate step in the biosynthesis of riboflavin. The protein is 6,7-dimethyl-8-ribityllumazine synthase of Vibrio cholerae serotype O1 (strain ATCC 39315 / El Tor Inaba N16961).